We begin with the raw amino-acid sequence, 116 residues long: Small ribosomal subunit protein uS13 (116 aa).

Residues 92–116 (RRGLPVRGQNTKNNARTRKGTKRNR) form a disordered region. Residues 106-116 (ARTRKGTKRNR) are compositionally biased toward basic residues.

It belongs to the universal ribosomal protein uS13 family. In terms of assembly, part of the 30S ribosomal subunit. Forms a loose heterodimer with protein S19. Forms two bridges to the 50S subunit in the 70S ribosome.

In terms of biological role, located at the top of the head of the 30S subunit, it contacts several helices of the 16S rRNA. In the 70S ribosome it contacts the 23S rRNA (bridge B1a) and protein L5 of the 50S subunit (bridge B1b), connecting the 2 subunits; these bridges are implicated in subunit movement. Contacts the tRNAs in the A and P-sites. This is Small ribosomal subunit protein uS13 from Lactobacillus acidophilus (strain ATCC 700396 / NCK56 / N2 / NCFM).